Reading from the N-terminus, the 477-residue chain is Adenosylhomocysteinase (477 aa).

Residues threonine 63, aspartate 142, and glutamate 202 each coordinate substrate. An NAD(+)-binding site is contributed by 203–205 (TTT). Residues lysine 232 and aspartate 236 each contribute to the substrate site. NAD(+) contacts are provided by residues asparagine 237, 266 to 271 (GYGDVG), glutamate 289, asparagine 324, 345 to 347 (IGH), and asparagine 390.

The protein belongs to the adenosylhomocysteinase family. Requires NAD(+) as cofactor.

It localises to the cytoplasm. It carries out the reaction S-adenosyl-L-homocysteine + H2O = L-homocysteine + adenosine. It functions in the pathway amino-acid biosynthesis; L-homocysteine biosynthesis; L-homocysteine from S-adenosyl-L-homocysteine: step 1/1. Functionally, may play a key role in the regulation of the intracellular concentration of adenosylhomocysteine. In Leptothrix cholodnii (strain ATCC 51168 / LMG 8142 / SP-6) (Leptothrix discophora (strain SP-6)), this protein is Adenosylhomocysteinase.